The following is a 75-amino-acid chain: Metallothionein-like protein 1B (75 aa).

The protein belongs to the metallothionein superfamily. Type 15 family.

Its function is as follows. Metallothioneins have a high content of cysteine residues that bind various heavy metals. The sequence is that of Metallothionein-like protein 1B (MT1B) from Vicia faba (Broad bean).